We begin with the raw amino-acid sequence, 349 residues long: Rhodopsin (349 aa).

Topologically, residues 1 to 33 are extracellular; it reads TEGPYFYIPMSNATGIVRSPYEYPQYYLVYPAA. N12 carries N-linked (GlcNAc...) asparagine glycosylation. A helical transmembrane segment spans residues 34–58; it reads YAVLGAYMFFLIIFGFPVNFLTLYV. Residues 59 to 70 are Cytoplasmic-facing; it reads TIEHKKLRTPLN. The helical transmembrane segment at 71 to 93 threads the bilayer; that stretch reads YILLNLAVADLFMVIGGFTTTIY. The Extracellular segment spans residues 94–107; the sequence is TSMHGYFVLGRLGC. Residues C107 and C184 are joined by a disulfide bond. The helical transmembrane segment at 108–130 threads the bilayer; it reads NLEGFSATLGGMIGLWSLVVLAI. Positions 131–133 match the 'Ionic lock' involved in activated form stabilization motif; sequence ERW. At 131-149 the chain is on the cytoplasmic side; it reads ERWVVVCKPMSNFRFGENH. Residues 150–170 traverse the membrane as a helical segment; the sequence is AIMGVTLTWVMGLACTVPPLV. At 171-199 the chain is on the extracellular side; sequence GWSRYIPEGMQCSCGIDYYTRAEGFNNDS. N-linked (GlcNAc...) asparagine glycosylation is present at N197. Residues 200–221 traverse the membrane as a helical segment; it reads YVLYMFVCHFLIPLVVIFFCYG. Residues 222-249 are Cytoplasmic-facing; sequence RLLCAVKEAAAAQQESETTQRAEREVTR. Residues 250 to 271 traverse the membrane as a helical segment; it reads MVILMVIGFLVCWLPYASVAWY. The Extracellular portion of the chain corresponds to 272 to 283; the sequence is IFTHQGSEFGPL. Residues 284 to 305 traverse the membrane as a helical segment; it reads FMTIPAFFAKSSSIYNPVIYIC. K293 bears the N6-(retinylidene)lysine mark. Topologically, residues 306–349 are cytoplasmic; the sequence is MNKQFRQCMLTTLFCGKNPFEEEEGASSTKTEASSASSSSVSPA. Residue C320 is the site of S-palmitoyl cysteine attachment. Positions 326–349 are disordered; it reads EEEEGASSTKTEASSASSSSVSPA. Residues 331–349 show a composition bias toward low complexity; the sequence is ASSTKTEASSASSSSVSPA.

It belongs to the G-protein coupled receptor 1 family. Opsin subfamily. Phosphorylated on some or all of the serine and threonine residues present in the C-terminal region. Post-translationally, contains one covalently linked retinal chromophore.

The protein resides in the membrane. The protein localises to the cell projection. It is found in the cilium. Its subcellular location is the photoreceptor outer segment. Functionally, photoreceptor required for image-forming vision at low light intensity. While most salt water fish species use retinal as chromophore, most freshwater fish use 3-dehydroretinal, or a mixture of retinal and 3-dehydroretinal. Light-induced isomerization of 11-cis to all-trans retinal triggers a conformational change that activates signaling via G-proteins. Subsequent receptor phosphorylation mediates displacement of the bound G-protein alpha subunit by arrestin and terminates signaling. This is Rhodopsin (rho) from Myripristis violacea (Lattice soldierfish).